An 86-amino-acid chain; its full sequence is Putative membrane protein insertion efficiency factor (86 aa).

The protein belongs to the UPF0161 family.

It localises to the cell inner membrane. Its function is as follows. Could be involved in insertion of integral membrane proteins into the membrane. The chain is Putative membrane protein insertion efficiency factor from Pasteurella multocida (strain Pm70).